Consider the following 241-residue polypeptide: Carboxy-S-adenosyl-L-methionine synthase (241 aa).

S-adenosyl-L-methionine contacts are provided by residues Y38, 63 to 65 (GCS), 88 to 89 (DN), 116 to 117 (DI), N131, and R198.

This sequence belongs to the class I-like SAM-binding methyltransferase superfamily. Cx-SAM synthase family. Homodimer.

The catalysed reaction is prephenate + S-adenosyl-L-methionine = carboxy-S-adenosyl-L-methionine + 3-phenylpyruvate + H2O. Its function is as follows. Catalyzes the conversion of S-adenosyl-L-methionine (SAM) to carboxy-S-adenosyl-L-methionine (Cx-SAM). In Glaesserella parasuis serovar 5 (strain SH0165) (Haemophilus parasuis), this protein is Carboxy-S-adenosyl-L-methionine synthase.